Consider the following 386-residue polypeptide: Patatin-2-Kuras 3 (386 aa).

Positions 1–23 are cleaved as a signal peptide; sequence MATTKSVLVLFFMILATTSSTCA. Positions 32-229 constitute a PNPLA domain; the sequence is LSIDGGGIKG…TVGDPALLSL (198 aa). Positions 36–41 match the GXGXXG motif; the sequence is GGGIKG. Residues 75–79 carry the GXSXG motif; sequence GTSTG. The Nucleophile role is filled by Ser77. N-linked (GlcNAc...) asparagine glycosylation occurs at Asn115. The active-site Proton acceptor is the Asp215. Positions 215–217 match the DGA/G motif; it reads DGA. Positions 321 to 384 form a coiled coil; that stretch reads ENALTGTTTE…DRKKLRANKA (64 aa).

This sequence belongs to the patatin family. In terms of tissue distribution, tuber.

The protein resides in the vacuole. Its function is as follows. Probable lipolytic acyl hydrolase (LAH), an activity which is thought to be involved in the response of tubers to pathogens. The protein is Patatin-2-Kuras 3 (pat2-k3) of Solanum tuberosum (Potato).